The sequence spans 177 residues: Large ribosomal subunit protein uL6 (177 aa).

Belongs to the universal ribosomal protein uL6 family. In terms of assembly, part of the 50S ribosomal subunit.

Functionally, this protein binds to the 23S rRNA, and is important in its secondary structure. It is located near the subunit interface in the base of the L7/L12 stalk, and near the tRNA binding site of the peptidyltransferase center. The protein is Large ribosomal subunit protein uL6 of Bartonella henselae (strain ATCC 49882 / DSM 28221 / CCUG 30454 / Houston 1) (Rochalimaea henselae).